Consider the following 268-residue polypeptide: AN1-type zinc finger protein 1 (268 aa).

Ala-2 is modified (N-acetylalanine). AN1-type zinc fingers lie at residues 4–52 (LDIG…VINE) and 58–106 (QHTS…IPKP). Cys-10, Cys-15, Cys-25, Cys-28, Cys-33, His-36, His-42, Cys-44, Cys-64, Cys-69, Cys-79, Cys-82, Cys-87, His-90, His-96, and Cys-98 together coordinate Zn(2+). The tract at residues 160–260 (QTERIYFQVF…EYLNDEEQFC (101 aa)) is ubiquitin-like.

In terms of assembly, associates with the 26S proteasome; this association occurs upon exposure to arsenite and is reduced in the presence of ATP. Interacts (via AN1-type 1 and 2 zinc fingers) with PSMD1; this interaction is increased upon arsenite treatment and occurs in an ATP-independent manner. Interacts with PSMC4. Interacts with PSMA1. Interacts (via its ubiquitin-like region) with VCP; this interaction occurs in an arsenite-dependent manner and is necessary for the recruitment of the ubiquitin-selective ATPase VCP to stress granules (SGs).

It localises to the cytoplasm. Its subcellular location is the stress granule. In terms of biological role, plays a role in the regulation of cytoplasmic stress granules (SGs) turnover. SGs are dynamic and transient cytoplasmic ribonucleoprotein assemblies important for cellular protein homeostasis when protein production is suspended after acute exogenous stress. Associates with SGs and is involved in the efficient and specific arsenite-induced clearance process of SGs through the recruitment of the ubiquitin-selective ATPase VCP and the 26S proteasome. This process requires both complexes for efficient degradation of damaged ubiquitinated SG proteins during recovery from arsenite stress, and hence avoiding aberrant cytoplasmic SGs degradation via autophagy. This chain is AN1-type zinc finger protein 1, found in Homo sapiens (Human).